An 81-amino-acid polypeptide reads, in one-letter code: MTKNTSLTIFMVVLVIGMLYTSIFIKYSDRTCHVYIKAENCEIDQCNWECGTKYKRVGVQGLCVPPGFDPIDQACLCSFNC.

Residues 1–21 (MTKNTSLTIFMVVLVIGMLYT) form the signal peptide. 4 disulfide bridges follow: Cys32–Cys81, Cys41–Cys63, Cys46–Cys75, and Cys50–Cys77.

Belongs to the DEFL family.

It localises to the secreted. The sequence is that of Defensin-like protein 130 (LCR28) from Arabidopsis thaliana (Mouse-ear cress).